The primary structure comprises 1281 residues: Angiotensin-converting enzyme (1281 aa).

An N-terminal signal peptide occupies residues 1–17; sequence MPAALGLLLPWLSLVGA. Topologically, residues 18 to 1241 are extracellular; sequence LQPGLEPPQS…MSVGTKQATA (1224 aa). Peptidase M2 domains follow at residues 28-610 and 629-1208; these read DPTE…LGWP and IVDE…LGWP. N-linked (GlcNAc...) asparagine glycans are attached at residues N42, N62, N80, N99, and N148. C145 and C151 are oxidised to a cystine. Chloride is bound at residue Y217. N304 carries N-linked (GlcNAc...) asparagine glycosylation. A disulfide bridge connects residues C345 and C363. A Zn(2+)-binding site is contributed by H376. E377 serves as the catalytic Proton acceptor 1. Zn(2+)-binding residues include H380 and E404. Residue N495 is glycosylated (N-linked (GlcNAc...) asparagine). The Proton donor 1 role is filled by H506. Chloride is bound at residue R515. C531 and C543 are oxidised to a cystine. N-linked (GlcNAc...) asparagine glycans are attached at residues N535, N573, N601, N643, N663, and N746. Cysteines 743 and 749 form a disulfide. Positions 777 and 815 each coordinate chloride. Cysteines 943 and 961 form a disulfide. A Zn(2+)-binding site is contributed by H974. E975 acts as the Proton acceptor 2 in catalysis. Residues H978 and E1002 each coordinate Zn(2+). W1076 and R1080 together coordinate chloride. Catalysis depends on H1104, which acts as the Proton donor 2. Chloride is bound at residue R1113. The cysteines at positions 1129 and 1141 are disulfide-linked. An N-linked (GlcNAc...) asparagine glycan is attached at N1177. Residues 1201–1240 form a juxtamembrane stalk region; that stretch reads NGEVLGWPEYSWTPYAVTEFHAATDTADFLGMSVGTKQAT. Residues 1242 to 1262 form a helical membrane-spanning segment; sequence GAWVLLALALVFLITSIFLGV. Residues 1263 to 1281 are Cytoplasmic-facing; the sequence is KLFSSRRKAFKSSSEMELK.

Belongs to the peptidase M2 family. It depends on Zn(2+) as a cofactor. The cofactor is chloride.

It is found in the cell membrane. The protein localises to the cytoplasm. It carries out the reaction Release of a C-terminal dipeptide, oligopeptide-|-Xaa-Yaa, when Xaa is not Pro, and Yaa is neither Asp nor Glu. Thus, conversion of angiotensin I to angiotensin II, with increase in vasoconstrictor activity, but no action on angiotensin II.. The enzyme catalyses angiotensin I + H2O = L-histidyl-L-leucine + angiotensin II. It catalyses the reaction bradykinin + H2O = L-Phe-L-Arg + bradykinin(1-7). The catalysed reaction is substance P + H2O = substance P(1-9) + L-Leu-L-Met-NH2. It carries out the reaction substance P + H2O = substance P(1-8) + Gly-L-Leu-L-Met-NH2. The enzyme catalyses substance P + H2O = L-Phe-L-Phe-Gly-L-Leu-L-Met-NH2 + substance P(1-6). It catalyses the reaction neurotensin + H2O = neurotensin(1-11) + L-isoleucyl-L-leucine. The catalysed reaction is goralatide + H2O = N-acetyl-L-seryl-L-aspartate + L-lysyl-L-proline. It carries out the reaction Met-enkephalin + H2O = L-phenylalanyl-L-methionine + L-tyrosylglycylglycine. The enzyme catalyses Leu-enkephalin + H2O = L-tyrosylglycylglycine + L-phenylalanyl-L-leucine. It catalyses the reaction Met-enkephalin-Arg-Phe + H2O = L-arginyl-L-phenylalanine + Met-enkephalin. Its function is as follows. Dipeptidyl carboxypeptidase that removes dipeptides from the C-terminus of a variety of circulating hormones, such as angiotensin I, bradykinin or enkephalins, thereby playing a key role in the regulation of blood pressure, electrolyte homeostasis or synaptic plasticity. Composed of two similar catalytic domains, each possessing a functional active site, with different selectivity for substrates. Plays a major role in the angiotensin-renin system that regulates blood pressure and sodium retention by the kidney by converting angiotensin I to angiotensin II, resulting in an increase of the vasoconstrictor activity of angiotensin. Also able to inactivate bradykinin, a potent vasodilator, and therefore enhance the blood pressure response. Acts as a regulator of synaptic transmission by mediating cleavage of neuropeptide hormones, such as substance P, neurotensin or enkephalins. Catalyzes degradation of different enkephalin neuropeptides (Met-enkephalin, Leu-enkephalin, Met-enkephalin-Arg-Phe and possibly Met-enkephalin-Arg-Gly-Leu). Also acts as a regulator of hematopoietic stem cell differentiation by mediating degradation of hemoregulatory peptide N-acetyl-SDKP (AcSDKP). This chain is Angiotensin-converting enzyme, found in Gallus gallus (Chicken).